A 380-amino-acid polypeptide reads, in one-letter code: Glucose-1-phosphate adenylyltransferase (380 aa).

Alpha-D-glucose 1-phosphate contacts are provided by residues Gly164, 179–180 (EK), and Ser190.

It belongs to the bacterial/plant glucose-1-phosphate adenylyltransferase family. As to quaternary structure, homotetramer.

The enzyme catalyses alpha-D-glucose 1-phosphate + ATP + H(+) = ADP-alpha-D-glucose + diphosphate. The protein operates within glycan biosynthesis; glycogen biosynthesis. Functionally, involved in the biosynthesis of ADP-glucose, a building block required for the elongation reactions to produce glycogen. Catalyzes the reaction between ATP and alpha-D-glucose 1-phosphate (G1P) to produce pyrophosphate and ADP-Glc. In Streptococcus sanguinis (strain SK36), this protein is Glucose-1-phosphate adenylyltransferase.